A 131-amino-acid polypeptide reads, in one-letter code: UPF0102 protein YraN (131 aa).

The span at M1–T19 shows a compositional bias: polar residues. A disordered region spans residues M1–D21.

It belongs to the UPF0102 family.

This chain is UPF0102 protein YraN, found in Escherichia coli O127:H6 (strain E2348/69 / EPEC).